A 202-amino-acid chain; its full sequence is LexA repressor (202 aa).

Residues 28–48 (RAEIAQELGFKSPNAAEEHLK) constitute a DNA-binding region (H-T-H motif). Active-site for autocatalytic cleavage activity residues include S123 and K160.

This sequence belongs to the peptidase S24 family. Homodimer.

It carries out the reaction Hydrolysis of Ala-|-Gly bond in repressor LexA.. Its function is as follows. Represses a number of genes involved in the response to DNA damage (SOS response), including recA and lexA. In the presence of single-stranded DNA, RecA interacts with LexA causing an autocatalytic cleavage which disrupts the DNA-binding part of LexA, leading to derepression of the SOS regulon and eventually DNA repair. This is LexA repressor from Pseudomonas putida (Arthrobacter siderocapsulatus).